A 227-amino-acid polypeptide reads, in one-letter code: Glutathione S-transferase U27 (227 aa).

A GST N-terminal domain is found at 4–84 (EEVVVLNFWP…YIDEVWKDDK (81 aa)). Glutathione is bound by residues 14 to 15 (SM), 41 to 42 (QK), 55 to 56 (KI), and 68 to 69 (ES). One can recognise a GST C-terminal domain in the interval 92-217 (DPYQKSQCRF…LKIFDRVTQI (126 aa)).

The protein belongs to the GST superfamily. Tau family.

It is found in the cytoplasm. The protein resides in the cytosol. The enzyme catalyses RX + glutathione = an S-substituted glutathione + a halide anion + H(+). Its function is as follows. May be involved in the conjugation of reduced glutathione to a wide number of exogenous and endogenous hydrophobic electrophiles and have a detoxification role against certain herbicides. The chain is Glutathione S-transferase U27 (GSTU27) from Arabidopsis thaliana (Mouse-ear cress).